The sequence spans 230 residues: uncharacterized protein (230 aa).

Residue Val-10–Val-34 coordinates NADP(+). Residue Ser-139 coordinates substrate. Catalysis depends on Tyr-152, which acts as the Proton acceptor.

It belongs to the short-chain dehydrogenases/reductases (SDR) family.

This is an uncharacterized protein from Staphylococcus epidermidis (strain ATCC 12228 / FDA PCI 1200).